We begin with the raw amino-acid sequence, 427 residues long: Methylenetetrahydrofolate--tRNA-(uracil-5-)-methyltransferase TrmFO (427 aa).

FAD is bound at residue 6 to 11 (GAGLAG).

This sequence belongs to the MnmG family. TrmFO subfamily. The cofactor is FAD.

The protein localises to the cytoplasm. It carries out the reaction uridine(54) in tRNA + (6R)-5,10-methylene-5,6,7,8-tetrahydrofolate + NADH + H(+) = 5-methyluridine(54) in tRNA + (6S)-5,6,7,8-tetrahydrofolate + NAD(+). It catalyses the reaction uridine(54) in tRNA + (6R)-5,10-methylene-5,6,7,8-tetrahydrofolate + NADPH + H(+) = 5-methyluridine(54) in tRNA + (6S)-5,6,7,8-tetrahydrofolate + NADP(+). Functionally, catalyzes the folate-dependent formation of 5-methyl-uridine at position 54 (M-5-U54) in all tRNAs. The protein is Methylenetetrahydrofolate--tRNA-(uracil-5-)-methyltransferase TrmFO of Acholeplasma laidlawii (strain PG-8A).